A 379-amino-acid chain; its full sequence is Queuine tRNA-ribosyltransferase (379 aa).

Residue aspartate 94 is the Proton acceptor of the active site. Substrate is bound by residues 94 to 98 (DSGGF), aspartate 148, glutamine 191, and glycine 218. Residues 249-255 (GVGSPDS) are RNA binding. Catalysis depends on aspartate 268, which acts as the Nucleophile. The RNA binding; important for wobble base 34 recognition stretch occupies residues 273–277 (TRIAR). Zn(2+) contacts are provided by cysteine 306, cysteine 308, cysteine 311, and histidine 337.

It belongs to the queuine tRNA-ribosyltransferase family. Homodimer. Within each dimer, one monomer is responsible for RNA recognition and catalysis, while the other monomer binds to the replacement base PreQ1. Zn(2+) serves as cofactor.

It catalyses the reaction 7-aminomethyl-7-carbaguanine + guanosine(34) in tRNA = 7-aminomethyl-7-carbaguanosine(34) in tRNA + guanine. Its pathway is tRNA modification; tRNA-queuosine biosynthesis. Its function is as follows. Catalyzes the base-exchange of a guanine (G) residue with the queuine precursor 7-aminomethyl-7-deazaguanine (PreQ1) at position 34 (anticodon wobble position) in tRNAs with GU(N) anticodons (tRNA-Asp, -Asn, -His and -Tyr). Catalysis occurs through a double-displacement mechanism. The nucleophile active site attacks the C1' of nucleotide 34 to detach the guanine base from the RNA, forming a covalent enzyme-RNA intermediate. The proton acceptor active site deprotonates the incoming PreQ1, allowing a nucleophilic attack on the C1' of the ribose to form the product. After dissociation, two additional enzymatic reactions on the tRNA convert PreQ1 to queuine (Q), resulting in the hypermodified nucleoside queuosine (7-(((4,5-cis-dihydroxy-2-cyclopenten-1-yl)amino)methyl)-7-deazaguanosine). The sequence is that of Queuine tRNA-ribosyltransferase from Listeria monocytogenes serotype 4a (strain HCC23).